The chain runs to 39 residues: Cytochrome b559 subunit beta (39 aa).

Residues 14-30 (WLAIHGLAVPTVFFLGS) traverse the membrane as a helical segment. Position 18 (histidine 18) interacts with heme.

It belongs to the PsbE/PsbF family. As to quaternary structure, heterodimer of an alpha subunit and a beta subunit. PSII is composed of 1 copy each of membrane proteins PsbA, PsbB, PsbC, PsbD, PsbE, PsbF, PsbH, PsbI, PsbJ, PsbK, PsbL, PsbM, PsbT, PsbX, PsbY, PsbZ, Psb30/Ycf12, at least 3 peripheral proteins of the oxygen-evolving complex and a large number of cofactors. It forms dimeric complexes. Heme b is required as a cofactor.

The protein resides in the plastid. It is found in the chloroplast thylakoid membrane. Its function is as follows. This b-type cytochrome is tightly associated with the reaction center of photosystem II (PSII). PSII is a light-driven water:plastoquinone oxidoreductase that uses light energy to abstract electrons from H(2)O, generating O(2) and a proton gradient subsequently used for ATP formation. It consists of a core antenna complex that captures photons, and an electron transfer chain that converts photonic excitation into a charge separation. The protein is Cytochrome b559 subunit beta of Psilotum nudum (Whisk fern).